The chain runs to 102 residues: Small ribosomal subunit protein uS10 (102 aa).

This sequence belongs to the universal ribosomal protein uS10 family. As to quaternary structure, part of the 30S ribosomal subunit.

Its function is as follows. Involved in the binding of tRNA to the ribosomes. The protein is Small ribosomal subunit protein uS10 of Brucella abortus (strain S19).